The chain runs to 152 residues: Endoribonuclease YbeY (152 aa).

Zn(2+) is bound by residues His113, His117, and His123.

It belongs to the endoribonuclease YbeY family. Zn(2+) serves as cofactor.

It is found in the cytoplasm. Single strand-specific metallo-endoribonuclease involved in late-stage 70S ribosome quality control and in maturation of the 3' terminus of the 16S rRNA. This is Endoribonuclease YbeY from Delftia acidovorans (strain DSM 14801 / SPH-1).